The chain runs to 284 residues: Pantothenate synthetase (284 aa).

30–37 serves as a coordination point for ATP; the sequence is MGNLHDGH. Catalysis depends on His37, which acts as the Proton donor. Gln61 is a binding site for (R)-pantoate. Gln61 contributes to the beta-alanine binding site. 149–152 provides a ligand contact to ATP; that stretch reads GEKD. Gln155 is a (R)-pantoate binding site. ATP is bound by residues Ile178 and 186-189; that span reads LSSR.

It belongs to the pantothenate synthetase family. Homodimer.

Its subcellular location is the cytoplasm. The enzyme catalyses (R)-pantoate + beta-alanine + ATP = (R)-pantothenate + AMP + diphosphate + H(+). The protein operates within cofactor biosynthesis; (R)-pantothenate biosynthesis; (R)-pantothenate from (R)-pantoate and beta-alanine: step 1/1. Its function is as follows. Catalyzes the condensation of pantoate with beta-alanine in an ATP-dependent reaction via a pantoyl-adenylate intermediate. The sequence is that of Pantothenate synthetase from Salmonella newport (strain SL254).